A 132-amino-acid chain; its full sequence is uncharacterized protein (132 aa).

A signal peptide spans 1-19 (MKKALFLVGLVFTAGVISS). The N-palmitoyl cysteine moiety is linked to residue C20. Residue C20 is the site of S-diacylglycerol cysteine attachment.

It localises to the cell membrane. This is an uncharacterized protein from Aquifex aeolicus (strain VF5).